A 295-amino-acid polypeptide reads, in one-letter code: Small ribosomal subunit biogenesis GTPase RsgA (295 aa).

A CP-type G domain is found at 68–228; that stretch reads KNLLTKPHVA…VVDTPGFANL (161 aa). GTP-binding positions include 117 to 120 and 170 to 178; these read NKMD and GLSGVGKSS. Residues cysteine 250, cysteine 255, histidine 257, and cysteine 263 each coordinate Zn(2+).

It belongs to the TRAFAC class YlqF/YawG GTPase family. RsgA subfamily. In terms of assembly, monomer. Associates with 30S ribosomal subunit, binds 16S rRNA. Zn(2+) serves as cofactor.

Its subcellular location is the cytoplasm. Its function is as follows. One of several proteins that assist in the late maturation steps of the functional core of the 30S ribosomal subunit. Helps release RbfA from mature subunits. May play a role in the assembly of ribosomal proteins into the subunit. Circularly permuted GTPase that catalyzes slow GTP hydrolysis, GTPase activity is stimulated by the 30S ribosomal subunit. In Thermotoga maritima (strain ATCC 43589 / DSM 3109 / JCM 10099 / NBRC 100826 / MSB8), this protein is Small ribosomal subunit biogenesis GTPase RsgA.